The following is a 59-amino-acid chain: MKQKIKVTLVKSMIARPEKHRKVLRGMGLTKLNKTVELEDTPCIRGMIHKVSHLVSVKE.

It belongs to the universal ribosomal protein uL30 family. Part of the 50S ribosomal subunit.

The chain is Large ribosomal subunit protein uL30 from Desulfatibacillum aliphaticivorans.